Consider the following 359-residue polypeptide: Peptide chain release factor 1 (359 aa).

At Gln233 the chain carries N5-methylglutamine.

It belongs to the prokaryotic/mitochondrial release factor family. Methylated by PrmC. Methylation increases the termination efficiency of RF1.

The protein resides in the cytoplasm. Peptide chain release factor 1 directs the termination of translation in response to the peptide chain termination codons UAG and UAA. The polypeptide is Peptide chain release factor 1 (Clostridium acetobutylicum (strain ATCC 824 / DSM 792 / JCM 1419 / IAM 19013 / LMG 5710 / NBRC 13948 / NRRL B-527 / VKM B-1787 / 2291 / W)).